A 602-amino-acid chain; its full sequence is Potassium voltage-gated channel subfamily A member 5 (602 aa).

The tract at residues 1–202 (MEISLVPLEN…FYQLGDEAME (202 aa)) is tetramerization domain. Residues 1–238 (MEISLVPLEN…LIFEYPESSG (238 aa)) are Cytoplasmic-facing. The tract at residues 58–107 (EDANQGGRPLPPMAQELPQPRRLSAEDEEGEGDPGLGTVEEDQAPQDAGS) is disordered. S81 carries the post-translational modification Phosphoserine; by CK2 and PKA. K212 participates in a covalent cross-link: Glycyl lysine isopeptide (Lys-Gly) (interchain with G-Cter in SUMO). The chain crosses the membrane as a helical span at residues 239-260 (SARAIAIVSVLVILISIITFCL). Topologically, residues 261-314 (ETLPEFRDERELLRHPPVPPQPPAPAPGINGSVSGALSSGPTVAPLLPRTLADP) are extracellular. A helical membrane pass occupies residues 315-336 (FFIVETTCVIWFTFELLVRFFA). A lipid anchor (S-palmitoyl cysteine) is attached at C337. The Cytoplasmic portion of the chain corresponds to 337 to 347 (CPSKAEFSRNI). A helical transmembrane segment spans residues 348–368 (MNIIDVVAIFPYFITLGTELA). Residues 369 to 384 (EQQPGGGGQNGQQAMS) lie on the Extracellular side of the membrane. Residues 385-405 (LAILRVIRLVRVFRIFKLSRH) form a helical; Voltage-sensor membrane-spanning segment. Over 406–420 (SKGLQILGKTLQASM) the chain is Cytoplasmic. The tract at residues 407-420 (KGLQILGKTLQASM) is S4-S5 linker. A helical membrane pass occupies residues 421 to 442 (RELGLLIFFLFIGVILFSSAVY). Residues 443–456 (FAEADNHGSHFSSI) are Extracellular-facing. The helical intramembrane region spans 457-468 (PDAFWWAVVTMT). A Selectivity filter motif is present at residues 469 to 474 (TVGYGD). An intramembrane segment occupies 469–476 (TVGYGDMR). The Extracellular segment spans residues 477-483 (PITVGGK). A helical transmembrane segment spans residues 484–512 (IVGSLCAIAGVLTIALPVPVIVSNFNYFY). Over 513-602 (HRETDHEEQA…CLDTSRETDL (90 aa)) the chain is Cytoplasmic. Basic and acidic residues predominate over residues 523–536 (ALKEEQGNQRRESG). Positions 523 to 543 (ALKEEQGNQRRESGLDTGGQR) are disordered. Residue K525 forms a Glycyl lysine isopeptide (Lys-Gly) (interchain with G-Cter in SUMO) linkage. 3 positions are modified to phosphoserine; by PKA: S535, S546, and S569. Residues 600-602 (TDL) carry the PDZ-binding motif.

Belongs to the potassium channel family. A (Shaker) (TC 1.A.1.2) subfamily. Kv1.5/KCNA5 sub-subfamily. Homotetramer and heterotetramer of potassium channel proteins. Interacts with DLG1, which enhances channel currents. Forms a ternary complex with DLG1 and CAV3. Interacts with KCNAB1. Interacts with UBE2I. Interacts with XIRP2; the interaction is required for normal action potential configuration in the heart. Glycosylated. In terms of processing, sumoylated on Lys-212, and Lys-525, preferentially with SUMO3. Sumoylation regulates the voltage sensitivity of the channel. Expressed equally in atrium, ventricle, aorta and skeletal muscle. Weaker expression in brain.

Its subcellular location is the cell membrane. It carries out the reaction K(+)(in) = K(+)(out). In terms of biological role, voltage-gated potassium channel that mediates transmembrane potassium transport in excitable membranes. Forms tetrameric potassium-selective channels through which potassium ions pass in accordance with their electrochemical gradient. The channel alternates between opened and closed conformations in response to the voltage difference across the membrane. Can form functional homotetrameric channels and heterotetrameric channels that contain variable proportions of KCNA1, KCNA2, KCNA4, KCNA5, and possibly other family members as well; channel properties depend on the type of alpha subunits that are part of the channel. Channel properties are modulated by cytoplasmic beta subunits that regulate the subcellular location of the alpha subunits and promote rapid inactivation. Homotetrameric channels display rapid activation and slow inactivation. Required for normal electrical conduction including formation of the infranodal ventricular conduction system and normal action potential configuration, as a result of its interaction with XIRP2. May play a role in regulating the secretion of insulin in normal pancreatic islets. The protein is Potassium voltage-gated channel subfamily A member 5 (Kcna5) of Rattus norvegicus (Rat).